The primary structure comprises 351 residues: Fructose-1,6-bisphosphatase class 1 1 (351 aa).

Mg(2+) is bound by residues Glu-84, Asp-106, Leu-108, and Asp-109. Substrate-binding positions include Asp-109–Ser-112 and Asn-205. Glu-277 is a binding site for Mg(2+).

This sequence belongs to the FBPase class 1 family. Homotetramer. It depends on Mg(2+) as a cofactor.

It is found in the cytoplasm. The enzyme catalyses beta-D-fructose 1,6-bisphosphate + H2O = beta-D-fructose 6-phosphate + phosphate. It participates in carbohydrate biosynthesis; Calvin cycle. This is Fructose-1,6-bisphosphatase class 1 1 from Methylibium petroleiphilum (strain ATCC BAA-1232 / LMG 22953 / PM1).